The sequence spans 287 residues: 4-hydroxybenzoate octaprenyltransferase (287 aa).

The next 7 helical transmembrane spans lie at 23-40 (IGSL…WLAG), 99-119 (LFVV…TMTI), 141-161 (LPQF…YAAV), 163-183 (ESLP…TVAY), 213-233 (LIIG…GTMT), 235-255 (LGMP…YQQI), and 266-286 (FKAF…VLFG).

The protein belongs to the UbiA prenyltransferase family. It depends on Mg(2+) as a cofactor.

It localises to the cell inner membrane. It catalyses the reaction all-trans-octaprenyl diphosphate + 4-hydroxybenzoate = 4-hydroxy-3-(all-trans-octaprenyl)benzoate + diphosphate. It functions in the pathway cofactor biosynthesis; ubiquinone biosynthesis. Catalyzes the prenylation of para-hydroxybenzoate (PHB) with an all-trans polyprenyl group. Mediates the second step in the final reaction sequence of ubiquinone-8 (UQ-8) biosynthesis, which is the condensation of the polyisoprenoid side chain with PHB, generating the first membrane-bound Q intermediate 3-octaprenyl-4-hydroxybenzoate. The sequence is that of 4-hydroxybenzoate octaprenyltransferase from Pectobacterium carotovorum subsp. carotovorum (strain PC1).